Reading from the N-terminus, the 359-residue chain is 4-hydroxy-3-methylbut-2-en-1-yl diphosphate synthase (flavodoxin) (359 aa).

Cysteine 265, cysteine 268, cysteine 300, and glutamate 307 together coordinate [4Fe-4S] cluster.

Belongs to the IspG family. It depends on [4Fe-4S] cluster as a cofactor.

The enzyme catalyses (2E)-4-hydroxy-3-methylbut-2-enyl diphosphate + oxidized [flavodoxin] + H2O + 2 H(+) = 2-C-methyl-D-erythritol 2,4-cyclic diphosphate + reduced [flavodoxin]. It functions in the pathway isoprenoid biosynthesis; isopentenyl diphosphate biosynthesis via DXP pathway; isopentenyl diphosphate from 1-deoxy-D-xylulose 5-phosphate: step 5/6. Converts 2C-methyl-D-erythritol 2,4-cyclodiphosphate (ME-2,4cPP) into 1-hydroxy-2-methyl-2-(E)-butenyl 4-diphosphate. This chain is 4-hydroxy-3-methylbut-2-en-1-yl diphosphate synthase (flavodoxin), found in Lawsonia intracellularis (strain PHE/MN1-00).